We begin with the raw amino-acid sequence, 196 residues long: Molybdenum cofactor guanylyltransferase (196 aa).

Residues 12–14, K25, N53, D71, and D101 contribute to the GTP site; that span reads LAG. D101 contributes to the Mg(2+) binding site.

It belongs to the MobA family. Monomer. The cofactor is Mg(2+).

It localises to the cytoplasm. It catalyses the reaction Mo-molybdopterin + GTP + H(+) = Mo-molybdopterin guanine dinucleotide + diphosphate. Functionally, transfers a GMP moiety from GTP to Mo-molybdopterin (Mo-MPT) cofactor (Moco or molybdenum cofactor) to form Mo-molybdopterin guanine dinucleotide (Mo-MGD) cofactor. The sequence is that of Molybdenum cofactor guanylyltransferase from Bordetella petrii (strain ATCC BAA-461 / DSM 12804 / CCUG 43448).